The sequence spans 244 residues: Futalosine hydrolase (244 aa).

This sequence belongs to the PNP/UDP phosphorylase family. Futalosine hydrolase subfamily.

It carries out the reaction futalosine + H2O = dehypoxanthine futalosine + hypoxanthine. Its pathway is quinol/quinone metabolism; menaquinone biosynthesis. Functionally, catalyzes the hydrolysis of futalosine (FL) to dehypoxanthine futalosine (DHFL) and hypoxanthine, a step in the biosynthesis of menaquinone (MK, vitamin K2). Cannot directly use aminodeoxyfutalosine (AFL) as a substrate. The chain is Futalosine hydrolase from Acidothermus cellulolyticus (strain ATCC 43068 / DSM 8971 / 11B).